We begin with the raw amino-acid sequence, 490 residues long: Bifunctional protein HldE (490 aa).

The ribokinase stretch occupies residues 1–330 (MDRTNIENFL…EAMAHHALEY (330 aa)). Residue 205-208 (NRKE) coordinates ATP. Residue aspartate 275 is part of the active site. The cytidylyltransferase stretch occupies residues 356-490 (FTNGCFDLLH…ERILDRYEQG (135 aa)).

The protein in the N-terminal section; belongs to the carbohydrate kinase PfkB family. It in the C-terminal section; belongs to the cytidylyltransferase family. Homodimer.

The catalysed reaction is D-glycero-beta-D-manno-heptose 7-phosphate + ATP = D-glycero-beta-D-manno-heptose 1,7-bisphosphate + ADP + H(+). The enzyme catalyses D-glycero-beta-D-manno-heptose 1-phosphate + ATP + H(+) = ADP-D-glycero-beta-D-manno-heptose + diphosphate. The protein operates within nucleotide-sugar biosynthesis; ADP-L-glycero-beta-D-manno-heptose biosynthesis; ADP-L-glycero-beta-D-manno-heptose from D-glycero-beta-D-manno-heptose 7-phosphate: step 1/4. Its pathway is nucleotide-sugar biosynthesis; ADP-L-glycero-beta-D-manno-heptose biosynthesis; ADP-L-glycero-beta-D-manno-heptose from D-glycero-beta-D-manno-heptose 7-phosphate: step 3/4. Functionally, catalyzes the phosphorylation of D-glycero-D-manno-heptose 7-phosphate at the C-1 position to selectively form D-glycero-beta-D-manno-heptose-1,7-bisphosphate. In terms of biological role, catalyzes the ADP transfer from ATP to D-glycero-beta-D-manno-heptose 1-phosphate, yielding ADP-D-glycero-beta-D-manno-heptose. This chain is Bifunctional protein HldE, found in Syntrophotalea carbinolica (strain DSM 2380 / NBRC 103641 / GraBd1) (Pelobacter carbinolicus).